Reading from the N-terminus, the 1142-residue chain is Auxin response factor 5 (1142 aa).

The segment at residues 148 to 250 (FCKTLTASDT…QLLLGIRRAN (103 aa)) is a DNA-binding region (TF-B3). Positions 1009 to 1093 (RTFTKVYKRG…RCIRILSPQE (85 aa)) constitute a PB1 domain. Residues 1114-1142 (SSSDGVNGWRPRCDQNPGNPSIGPYDQFE) form a disordered region.

This sequence belongs to the ARF family. As to quaternary structure, homodimers and heterodimers. Expressed in roots, culms, leaves and young panicles.

The protein localises to the nucleus. In terms of biological role, auxin response factors (ARFs) are transcriptional factors that bind specifically to the DNA sequence 5'-TGTCTC-3' found in the auxin-responsive promoter elements (AuxREs). The polypeptide is Auxin response factor 5 (ARF5) (Oryza sativa subsp. japonica (Rice)).